The primary structure comprises 159 residues: ATP synthase subunit b (159 aa).

The helical transmembrane segment at 7–27 (DFIWTLINFFVLLFILKILLY) threads the bilayer.

This sequence belongs to the ATPase B chain family. As to quaternary structure, F-type ATPases have 2 components, F(1) - the catalytic core - and F(0) - the membrane proton channel. F(1) has five subunits: alpha(3), beta(3), gamma(1), delta(1), epsilon(1). F(0) has three main subunits: a(1), b(2) and c(10-14). The alpha and beta chains form an alternating ring which encloses part of the gamma chain. F(1) is attached to F(0) by a central stalk formed by the gamma and epsilon chains, while a peripheral stalk is formed by the delta and b chains.

It is found in the cell membrane. Functionally, f(1)F(0) ATP synthase produces ATP from ADP in the presence of a proton or sodium gradient. F-type ATPases consist of two structural domains, F(1) containing the extramembraneous catalytic core and F(0) containing the membrane proton channel, linked together by a central stalk and a peripheral stalk. During catalysis, ATP synthesis in the catalytic domain of F(1) is coupled via a rotary mechanism of the central stalk subunits to proton translocation. Its function is as follows. Component of the F(0) channel, it forms part of the peripheral stalk, linking F(1) to F(0). The sequence is that of ATP synthase subunit b from Carboxydothermus hydrogenoformans (strain ATCC BAA-161 / DSM 6008 / Z-2901).